Consider the following 382-residue polypeptide: Galactokinase (382 aa).

34-37 contacts substrate; the sequence is EHTD. 124-130 lines the ATP pocket; the sequence is GAGLSSS. Mg(2+) is bound by residues Ser-130 and Glu-162. Asp-174 (proton acceptor) is an active-site residue. Tyr-223 provides a ligand contact to substrate.

This sequence belongs to the GHMP kinase family. GalK subfamily.

The protein localises to the cytoplasm. The enzyme catalyses alpha-D-galactose + ATP = alpha-D-galactose 1-phosphate + ADP + H(+). The protein operates within carbohydrate metabolism; galactose metabolism. Its function is as follows. Catalyzes the transfer of the gamma-phosphate of ATP to D-galactose to form alpha-D-galactose-1-phosphate (Gal-1-P). In Enterobacter sp. (strain 638), this protein is Galactokinase.